Reading from the N-terminus, the 391-residue chain is Nucleosome assembly protein 1-like 1 (391 aa).

M1 is subject to N-acetylmethionine. Positions 1–10 (MADIDNKEQS) are enriched in basic and acidic residues. Residues 1-32 (MADIDNKEQSELDQDLDDVEEVEEEETGEETK) form a disordered region. A2 carries the N-acetylalanine modification. S10 bears the Phosphoserine mark. Acidic residues predominate over residues 11–28 (ELDQDLDDVEEVEEEETG). T62 and T64 each carry phosphothreonine. The residue at position 69 (S69) is a Phosphoserine. Position 116 is an N6-acetyllysine (K116). Positions 125-150 (YEPTEEECEWKPDEEDEISEELKEKA) match the NAP1L motif motif. Positions 132 to 143 (CEWKPDEEDEIS) are enriched in acidic residues. Positions 132 to 163 (CEWKPDEEDEISEELKEKAKIEDEKKDEEKED) are disordered. S143 is modified (phosphoserine). A compositionally biased stretch (basic and acidic residues) spans 144-163 (EELKEKAKIEDEKKDEEKED). The Nuclear localization signal signature appears at 273–279 (IKKKQKH). Positions 346-376 (AIEDDDDDYDEEGEEADEEGEEEGDEENDPD) are enriched in acidic residues. A disordered region spans residues 346 to 391 (AIEDDDDDYDEEGEEADEEGEEEGDEENDPDYDPKKDQNPAECKQQ). Basic and acidic residues predominate over residues 377-391 (YDPKKDQNPAECKQQ). C388 carries the post-translational modification Cysteine methyl ester. Residue C388 is the site of S-farnesyl cysteine attachment. Residues 389–391 (KQQ) constitute a propeptide, removed in mature form.

It belongs to the nucleosome assembly protein (NAP) family. In terms of assembly, homodimer. The dimer binds strongly and sequentially to single and double H2A-H2B heterodimers. Interacts with ERCC6; this interaction increases ERCC6 processivity. Interacts with RAD54. Interacts with SETD1A. As to quaternary structure, (Microbial infection) Interacts with human herpesvirus 8 protein LANA1 (via N-terminus); this interaction is required for LANA1-dependent DNA replication. (Microbial infection) Interacts with hepatitis virus protein NS5A (via C-terminus); this interaction sequesters NAP1L1 in the cytoplasm, blocking its nuclear translocation. In terms of assembly, (Microbial infection) Interacts with Chikungunya virus non-structural protein 3 (via C-terminus). Monoglycylated on glutamate residues. Cannot be polyglycylated due to the absence of functional TTLL10 in human. In terms of processing, polyglutamylated by TTLL4 on glutamate residues, resulting in polyglutamate chains on the gamma-carboxyl group. Both polyglutamylation and monoglycylation modifications can coexist on the same protein on adjacent residues, and lowering polyglycylation levels increases polyglutamylation, and reciprocally. In terms of tissue distribution, ubiquitously expressed.

The protein localises to the nucleus. It is found in the melanosome. Its subcellular location is the cytoplasm. Its function is as follows. Histone chaperone that plays a role in the nuclear import of H2A-H2B and nucleosome assembly. Also participates in several important DNA repair mechanisms: greatly enhances ERCC6-mediated chromatin remodeling which is essential for transcription-coupled nucleotide excision DNA repair. Also stimulates homologous recombination (HR) by RAD51 and RAD54 which is essential in mitotic DNA double strand break (DSB) repair. Plays a key role in the regulation of embryonic neurogenesis. Promotes the proliferation of neural progenitors and inhibits neuronal differentiation during cortical development. Regulates neurogenesis via the modulation of RASSF10; regulates RASSF10 expression by promoting SETD1A-mediated H3K4 methylation at the RASSF10 promoter. Functionally, (Microbial infection) Positively regulates Epstein-Barr virus reactivation in epithelial cells through the induction of viral BZLF1 expression. (Microbial infection) Together with human herpesvirus 8 protein LANA1, assists the proper assembly of the nucleosome on the replicated viral DNA. In Homo sapiens (Human), this protein is Nucleosome assembly protein 1-like 1 (NAP1L1).